The sequence spans 316 residues: tRNA dimethylallyltransferase (316 aa).

17–24 (GPTASGKT) is an ATP binding site. Position 19-24 (19-24 (TASGKT)) interacts with substrate. Interaction with substrate tRNA stretches follow at residues 42-45 (DSAL), 166-170 (QRLSR), and 247-252 (RCVGYR).

It belongs to the IPP transferase family. Monomer. It depends on Mg(2+) as a cofactor.

The catalysed reaction is adenosine(37) in tRNA + dimethylallyl diphosphate = N(6)-dimethylallyladenosine(37) in tRNA + diphosphate. Functionally, catalyzes the transfer of a dimethylallyl group onto the adenine at position 37 in tRNAs that read codons beginning with uridine, leading to the formation of N6-(dimethylallyl)adenosine (i(6)A). The sequence is that of tRNA dimethylallyltransferase from Klebsiella pneumoniae (strain 342).